Here is a 122-residue protein sequence, read N- to C-terminus: HLLQFNKMIKFETRRNAIPPYAFYGCYCGWGGRGRPKDATDRCCFVHDCCYGKLAKCNTKWDFYRYSLKSGYITCGKGTWCEEQICECDRVAAECLRRSLSTYRYGYMIYPDSRCRGPSETC.

Disulfide bonds link C26/C115, C28/C44, C43/C95, C49/C122, C50/C88, C57/C81, and C75/C86. Residues Y27, G29, and G31 each contribute to the Ca(2+) site. The active site involves H47. Position 48 (D48) interacts with Ca(2+). D89 is a catalytic residue.

As to quaternary structure, heterodimer of one acidic (CA also named crotapotin) and one basic (CB) subunits; non-covalently linked. The cofactor is Ca(2+). Expressed by the venom gland.

It localises to the secreted. The enzyme catalyses a 1,2-diacyl-sn-glycero-3-phosphocholine + H2O = a 1-acyl-sn-glycero-3-phosphocholine + a fatty acid + H(+). Heterodimer CA-CB: Crotoxin is a potent presynaptic neurotoxin that possesses phospholipase A2 (PLA2) activity and exerts a lethal action by blocking neuromuscular transmission. It consists of a non-covalent association of a basic and weakly toxic PLA2 subunit (CB), with a small acidic, non-enzymatic and non-toxic subunit (CA also named crotapotin). The complex acts by binding to a specific 48-kDa protein (R48) receptor located on presynaptic membranes, forming a transient ternary complex CA-CB-R48, followed by dissociation of the CA-CB complex and release of the CA subunit. At equilibrium, only the CB subunits remain associated with the specific crotoxin receptor. In addition to neurotoxicity, crotoxin has been found to exert nephrotoxicity, and cardiovascular toxicity. Moreover, anti-inflammatory, immunomodulatory, anti-tumor and analgesic effects of crotoxin have also been reported. Functionally, monomer CB: The basic subunit of crotoxin is a snake venom phospholipase A2 (PLA2) that exhibits weak neurotoxicity and strong anticoagulant effects by binding to factor Xa (F10) and inhibiting the prothrombinase activity. In addition, it exerts myotoxicity, nephrotoxicity, and cardiovascular toxicity as well as anti-inflammatory, immunomodulatory, anti-tumor and analgesic effects. Also shows a strong antimicrobial activity against X.axonopodis passiforae (Gram-negative) which is completely dependent on the enzymatic activity. PLA2 catalyzes the calcium-dependent hydrolysis of the 2- acyl groups in 3-sn-phosphoglycerides. In Crotalus durissus collilineatus (Brazilian rattlesnake), this protein is Phospholipase A2 crotoxin basic chain.